We begin with the raw amino-acid sequence, 179 residues long: MSFQDPQPLDLKNYIREIPDFPKRGILFYDISTLIRSPDAWQVATARLARVIAAWQPDILAGIESRGFLTAAPLALRLGCGFTMLRKPGKLPGKTISLKYGLEYGEDELHIQADAIKPGQRVVVLDDLLATGGTLAASIDLLRKVGAEVVGASVLIELADLKGREKLDVPLNALMTYDE.

This sequence belongs to the purine/pyrimidine phosphoribosyltransferase family. Homodimer.

Its subcellular location is the cytoplasm. It catalyses the reaction AMP + diphosphate = 5-phospho-alpha-D-ribose 1-diphosphate + adenine. The protein operates within purine metabolism; AMP biosynthesis via salvage pathway; AMP from adenine: step 1/1. Its function is as follows. Catalyzes a salvage reaction resulting in the formation of AMP, that is energically less costly than de novo synthesis. The chain is Adenine phosphoribosyltransferase from Gluconobacter oxydans (strain 621H) (Gluconobacter suboxydans).